The chain runs to 315 residues: MSIPANTIQKDKMMHSDYYTQSQGPTVEQQPEWQASVQPYSDPHAYSPSFYMNMSQVPHFLPAQVDPFIYPNTLGSYGGDKQVQCLWETNGQVCMHVCQNSGELSTHISSNHITHDSKFVCLWKGCDREFKMFKAKYKLVNHMRVHTGERPFLCDVCNKVFARSENLKIHKRIHSGEKPFQCTHNGCTKLFANSSDRKKHMHVHSSHKPYSCMYPDCGKTYTHPSSLRKHTKVHENEKKSQLSPEHDESSDSGNASIGTPTTDESLTFSPENIKRDQHLHTMHTFMDRPNPFMQMYQNQFSNPTYHMFMAKPDSY.

Residues 83–112 (VQCLWETNGQVCMHVCQNSGELSTHISSNH) form a C2H2-type 1; atypical zinc finger. The C2H2-type 2; degenerate zinc finger occupies 124–146 (KGCDREFKMFKAKYKLVNHMRVH). 3 consecutive C2H2-type zinc fingers follow at residues 152-174 (FLCDVCNKVFARSENLKIHKRIH), 180-204 (FQCTHNGCTKLFANSSDRKKHMHVH), and 210-234 (YSCMYPDCGKTYTHPSSLRKHTKVH). The segment at 225-270 (SSLRKHTKVHENEKKSQLSPEHDESSDSGNASIGTPTTDESLTFSP) is disordered. Basic and acidic residues predominate over residues 233–249 (VHENEKKSQLSPEHDES). A compositionally biased stretch (polar residues) spans 251–270 (DSGNASIGTPTTDESLTFSP).

In terms of assembly, interacts with TCF transcription factor pop-1; the interaction is direct and facilitates transcriptional activation; transcription may be repressed by beta-catenin/sys-1.

The protein resides in the nucleus. Its subcellular location is the cytoplasm. Functionally, transcription factor. Modulates expression of target genes by binding to regulatory elements. Required for normal cell division timing and cell positioning in anterior lineages, acting in a cell-autonomous manner. Required for development, fusion and fate of cells of the ventral epidermis, the Pn.p cells, during larval development; acts in concert with homeobox genes lin-39 and mab-5. Required for the specification of the AIY interneuron. In complex with TCF transcription factor pop-1, positively modulates expression of LIM/homeobox protein ttx-3 in anterior daughter cells of the SMDD/AIY neuron lineage. In Caenorhabditis elegans, this protein is Zinc finger transcription factor ref-2.